The primary structure comprises 133 residues: Putative pre-16S rRNA nuclease (133 aa).

Belongs to the YqgF nuclease family.

The protein resides in the cytoplasm. Functionally, could be a nuclease involved in processing of the 5'-end of pre-16S rRNA. This is Putative pre-16S rRNA nuclease from Bordetella pertussis (strain Tohama I / ATCC BAA-589 / NCTC 13251).